The primary structure comprises 323 residues: tRNA U34 carboxymethyltransferase (323 aa).

Carboxy-S-adenosyl-L-methionine-binding positions include K91, W105, K110, G130, 152-154, 181-182, M196, Y200, and R315; these read DPT and IE.

Belongs to the class I-like SAM-binding methyltransferase superfamily. CmoB family. Homotetramer.

The catalysed reaction is carboxy-S-adenosyl-L-methionine + 5-hydroxyuridine(34) in tRNA = 5-carboxymethoxyuridine(34) in tRNA + S-adenosyl-L-homocysteine + H(+). Functionally, catalyzes carboxymethyl transfer from carboxy-S-adenosyl-L-methionine (Cx-SAM) to 5-hydroxyuridine (ho5U) to form 5-carboxymethoxyuridine (cmo5U) at position 34 in tRNAs. The sequence is that of tRNA U34 carboxymethyltransferase from Escherichia fergusonii (strain ATCC 35469 / DSM 13698 / CCUG 18766 / IAM 14443 / JCM 21226 / LMG 7866 / NBRC 102419 / NCTC 12128 / CDC 0568-73).